The chain runs to 332 residues: Nucleotide-binding protein RC1_2868 (332 aa).

A disordered region spans residues 1–27; sequence MTGQPLTMETAAGADAGTGAATHPADG. Over residues 10 to 22 the composition is skewed to low complexity; the sequence is TAAGADAGTGAAT. 36-43 is an ATP binding site; that stretch reads GMSGGGLS. 82–85 provides a ligand contact to GTP; that stretch reads DSRT. Basic and acidic residues-rich tracts occupy residues 302-312 and 322-332; these read GHRDLDRRHPA and VASRETPEEHR. The tract at residues 302 to 332 is disordered; it reads GHRDLDRRHPAPEPAPPWREVASRETPEEHR.

The protein belongs to the RapZ-like family.

Functionally, displays ATPase and GTPase activities. In Rhodospirillum centenum (strain ATCC 51521 / SW), this protein is Nucleotide-binding protein RC1_2868.